Consider the following 202-residue polypeptide: Superoxide dismutase [Mn/Fe] (202 aa).

Fe(3+) contacts are provided by histidine 27, histidine 81, aspartate 163, and histidine 167. Histidine 27, histidine 81, aspartate 163, and histidine 167 together coordinate Mn(2+).

Belongs to the iron/manganese superoxide dismutase family. The cofactor is Mn(2+). It depends on Fe(3+) as a cofactor.

It catalyses the reaction 2 superoxide + 2 H(+) = H2O2 + O2. Destroys superoxide anion radicals which are normally produced within the cells and which are toxic to biological systems. Catalyzes the dismutation of superoxide anion radicals into O2 and H2O2 by successive reduction and oxidation of the transition metal ion at the active site. The chain is Superoxide dismutase [Mn/Fe] (sodA) from Streptococcus agalactiae serotype V (strain ATCC BAA-611 / 2603 V/R).